Reading from the N-terminus, the 517-residue chain is MAYVLTETAAGYALLKASDKKIYKSSSLIEDLNTVEKVTEQFKIHRFEKFSSAANALEEANAIIEGRISDNLKKMLEDVKNDKKATLIVSEAKLGNAINKLGLNFSVVSDAASLDLHRAIKEFLPELLPGLDDSALKQMSLGLAHSMGRHKLKFSADKVDTMIVQAIALLDDLDKELNTYAMRCKEWYGWHFPELAKMITDSVAYARIILTMGIRSNAADTDLSEILPEEAEEQVKSAAEVSMGTEITDIDLENIKALAEQIVDFAAYREQLSNYLSSRMKAIAPNLTALVGELVGARLIAHSGSLTSLAKAPASTIQILGAEKALFRALKTKHDTPKYGLLYHASLVGQASGKNKGKIARVLAAKAAVALRYDSLAEDRDDSGDFGLSVRTKVESRLSALEGRDLRTTAKVIREQPKVDITEARAYNADADAPMADADSDDESETEEEPKKEKKDKKEKKDKKEKKDKKDKKRKREEDDEEEEEDSKKSKKEKKEKKEKKDKKEKKDKKEKKKEKK.

The Nop domain maps to Ile283–Gly403. A disordered region spans residues Glu423–Lys517. Residues Ala438–Glu448 show a composition bias toward acidic residues. Basic residues-rich tracts occupy residues Lys454–Lys475 and Lys489–Lys517. A coiled-coil region spans residues Asp456 to Lys517.

The protein belongs to the NOP5/NOP56 family.

Its subcellular location is the nucleus. The protein localises to the nucleolus. Required for pre-18S rRNA processing. May bind microtubules. In Debaryomyces hansenii (strain ATCC 36239 / CBS 767 / BCRC 21394 / JCM 1990 / NBRC 0083 / IGC 2968) (Yeast), this protein is Nucleolar protein 58 (NOP58).